The sequence spans 504 residues: D-alanine--D-alanyl carrier protein ligase (504 aa).

152-153 (TS) is a binding site for ATP. Aspartate 197 provides a ligand contact to D-alanine. 292–297 (NTYGPT) contacts ATP. Valine 301 contacts D-alanine. Residues aspartate 383, 394–397 (YNGR), and lysine 492 contribute to the ATP site. Lysine 492 serves as a coordination point for D-alanine.

It belongs to the ATP-dependent AMP-binding enzyme family. DltA subfamily.

The protein resides in the cytoplasm. The enzyme catalyses holo-[D-alanyl-carrier protein] + D-alanine + ATP = D-alanyl-[D-alanyl-carrier protein] + AMP + diphosphate. It participates in cell wall biogenesis; lipoteichoic acid biosynthesis. Functionally, catalyzes the first step in the D-alanylation of lipoteichoic acid (LTA), the activation of D-alanine and its transfer onto the D-alanyl carrier protein (Dcp) DltC. In an ATP-dependent two-step reaction, forms a high energy D-alanyl-AMP intermediate, followed by transfer of the D-alanyl residue as a thiol ester to the phosphopantheinyl prosthetic group of the Dcp. D-alanylation of LTA plays an important role in modulating the properties of the cell wall in Gram-positive bacteria, influencing the net charge of the cell wall. The sequence is that of D-alanine--D-alanyl carrier protein ligase from Bacillus mycoides (strain KBAB4) (Bacillus weihenstephanensis).